The primary structure comprises 407 residues: Myeloid cell nuclear differentiation antigen (407 aa).

A Pyrin domain is found at 1-88 (MVNEYKKILL…VNNLRKEKSK (88 aa)). The tract at residues 108 to 207 (EVGLAAPAPT…RQVDARRNVP (100 aa)) is disordered. The Nuclear localization signal motif lies at 131–137 (PVAQKRK). The segment covering 139–148 (PNKEKTEAKR) has biased composition (basic and acidic residues). Positions 177–190 (QTSSSTPSNTSFTP) are enriched in low complexity. Positions 196-394 (AQRQVDARRN…CGSHSFIKVI (199 aa)) constitute an HIN-200 domain.

Participates in a ternary complex with YY1 and the YY1 target DNA element. Binds nucleolin and nucleophosmin/NPM/B23. As to expression, expressed constitutively in cells of the myeloid lineage. Found in promyelocyte stage cells as well as in all other stage cells including peripheral blood monocytes and granulocytes. Also appears in myeloblast cells in some cases of acute myeloid Leukemia.

It localises to the nucleus. The protein localises to the cytoplasm. May act as a transcriptional activator/repressor in the myeloid lineage. Plays a role in the granulocyte/monocyte cell-specific response to interferon. Stimulates the DNA binding of the transcriptional repressor protein YY1. The polypeptide is Myeloid cell nuclear differentiation antigen (MNDA) (Homo sapiens (Human)).